The primary structure comprises 289 residues: Bidirectional sugar transporter SWEET15 (289 aa).

Over M1–T10 the chain is Extracellular. The chain crosses the membrane as a helical span at residues L11–A31. Residues I14–A100 enclose the MtN3/slv 1 domain. At P32 to G45 the chain is on the cytoplasmic side. The chain crosses the membrane as a helical span at residues F46–L66. Over L67–D70 the chain is Extracellular. The chain crosses the membrane as a helical span at residues A71 to L91. Topologically, residues Y92–K106 are cytoplasmic. A helical transmembrane segment spans residues V107–L127. At K128–N134 the chain is on the extracellular side. Residues V135 to V155 form a helical membrane-spanning segment. A MtN3/slv 2 domain is found at F136–G219. Residues A156 to M167 are Cytoplasmic-facing. A helical membrane pass occupies residues P168–L188. Residues K189–C193 are Extracellular-facing. Residues V194–F214 traverse the membrane as a helical segment. The Cytoplasmic segment spans residues Y215 to V289. A disordered region spans residues G249–V289. Over residues E277–V289 the composition is skewed to polar residues.

Belongs to the SWEET sugar transporter family. As to quaternary structure, forms homooligomers and/or heterooligomers.

It localises to the cell membrane. In terms of biological role, mediates both low-affinity uptake and efflux of sugar across the plasma membrane. This chain is Bidirectional sugar transporter SWEET15, found in Vitis vinifera (Grape).